A 518-amino-acid chain; its full sequence is Protein FAM98A (518 aa).

Disordered regions lie at residues 297–415 and 434–518; these read VLMG…GHSS and GSGY…HYTS. Residues 302-311 are compositionally biased toward basic and acidic residues; it reads VPDRGGRPNE. 3 stretches are compositionally biased toward gly residues: residues 349-364, 383-396, and 405-415; these read GGRGGHEQGGGRGGRG, WTDGGSGGGGGYQD, and QPGGYHGGHSS. Basic and acidic residues predominate over residues 447 to 459; sequence RYQDGGHHGDRGG. The span at 460–484 shows a compositional bias: gly residues; it reads GRGGRGGRGGRGGRAGQGGGWGGRG. The segment covering 488–504 has biased composition (low complexity); it reads YHQGGQFEQHFQHGGYQ. Polar residues predominate over residues 505-518; the sequence is YNHSGFGQGRHYTS.

This sequence belongs to the FAM98 family. In terms of assembly, interacts (via N- and C-terminus) with DDX1. Interacts (via N- and C-terminus) with C14orf166. Interacts with FAM98B. Interacts with PLEKHM1 (via N- and C-terminus). In terms of tissue distribution, expressed strongly in colorectal cancer cells. Expressed strongly in colorectal cancer tissues compared to wild-type colon samples (at protein level). Expressed strongly in colorectal cancer tissues compared to wild-type colon samples.

In terms of biological role, positively stimulates PRMT1-induced protein arginine methylation. Involved in skeletal homeostasis. Positively regulates lysosome peripheral distribution and ruffled border formation in osteoclasts. This is Protein FAM98A from Homo sapiens (Human).